The sequence spans 318 residues: Protein-methionine-sulfoxide reductase catalytic subunit MsrP (318 aa).

A signal peptide (tat-type signal) is located at residues methionine 1–alanine 40. Mo-molybdopterin-binding positions include asparagine 72, tyrosine 75–glutamate 76, cysteine 130, threonine 165, asparagine 217, arginine 222, and serine 233–lysine 235.

Belongs to the MsrP family. As to quaternary structure, heterodimer of a catalytic subunit (MsrP) and a heme-binding subunit (MsrQ). Mo-molybdopterin is required as a cofactor. Post-translationally, predicted to be exported by the Tat system. The position of the signal peptide cleavage has not been experimentally proven.

It localises to the periplasm. The enzyme catalyses L-methionyl-[protein] + a quinone + H2O = L-methionyl-(S)-S-oxide-[protein] + a quinol. It carries out the reaction L-methionyl-[protein] + a quinone + H2O = L-methionyl-(R)-S-oxide-[protein] + a quinol. Part of the MsrPQ system that repairs oxidized periplasmic proteins containing methionine sulfoxide residues (Met-O), using respiratory chain electrons. Thus protects these proteins from oxidative-stress damage caused by reactive species of oxygen and chlorine generated by the host defense mechanisms. MsrPQ is essential for the maintenance of envelope integrity under bleach stress, rescuing a wide series of structurally unrelated periplasmic proteins from methionine oxidation. The catalytic subunit MsrP is non-stereospecific, being able to reduce both (R-) and (S-) diastereoisomers of methionine sulfoxide. This is Protein-methionine-sulfoxide reductase catalytic subunit MsrP from Actinobacillus pleuropneumoniae serotype 5b (strain L20).